We begin with the raw amino-acid sequence, 135 residues long: Centromere protein S (135 aa).

The tract at residues 103–135 is disordered; it reads SLEQKEKKKKKSVSGGNVSRNSDMDTVVPESKD.

This sequence belongs to the TAF9 family. CENP-S/MHF1 subfamily. As to quaternary structure, heterodimer with CENPX, sometimes called MHF; this interaction stabilizes both partners. MHF heterodimers can assemble to form tetrameric structures. MHF also coassemble with CENPT-CENPW heterodimers at centromeres to form the tetrameric CENP-T-W-S-X complex. Forms a discrete complex with FANCM and CENPX, called FANCM-MHF; this interaction, probably mediated by direct binding between CENPS and FANCM, leads to synergistic activation of double-stranded DNA binding and strongly stimulates FANCM-mediated DNA remodeling. Recruited by FANCM to the Fanconi anemia (FA) core complex, which consists of CENPS, CENPX, FANCA, FANCB, FANCC, FANCE, FANCF, FANCG, FANCL, FANCM, FAAP24 and FAAP100. The FA core complex associates with Bloom syndrome (BLM) complex, which consists of at least BLM, DNA topoisomerase 3-alpha (TOP3A), RMI1/BLAP75, RPA1/RPA70 and RPA2/RPA32. The super complex between FA and BLM is called BRAFT. Component of the CENPA-CAD complex, composed of CENPI, CENPK, CENPL, CENPO, CENPP, CENPQ, CENPR and CENPS. The CENPA-CAD complex is probably recruited on centromeres by the CENPA-NAC complex, at least composed of CENPA, CENPC, CENPH, CENPM, CENPN, CENPT and CENPU.

It localises to the nucleus. It is found in the chromosome. Its subcellular location is the centromere. The protein localises to the kinetochore. Its function is as follows. DNA-binding component of the Fanconi anemia (FA) core complex. Required for the normal activation of the FA pathway, leading to monoubiquitination of the FANCI-FANCD2 complex in response to DNA damage, cellular resistance to DNA cross-linking drugs, and prevention of chromosomal breakage. In complex with CENPX (MHF heterodimer), crucial cofactor for FANCM in both binding and ATP-dependent remodeling of DNA. Stabilizes FANCM. In complex with CENPX and FANCM (but not other FANC proteins), rapidly recruited to blocked forks and promotes gene conversion at blocked replication forks. In complex with CENPT, CENPW and CENPX (CENP-T-W-S-X heterotetramer), involved in the formation of a functional kinetochore outer plate, which is essential for kinetochore-microtubule attachment and faithful mitotic progression. As a component of MHF and CENP-T-W-S-X complexes, binds DNA and bends it to form a nucleosome-like structure. DNA-binding function is fulfilled in the presence of CENPX, with the following preference for DNA substates: Holliday junction &gt; double-stranded &gt; splay arm &gt; single-stranded. Does not bind DNA on its own. This is Centromere protein S (cenps) from Xenopus laevis (African clawed frog).